Reading from the N-terminus, the 356-residue chain is Protein MGF 360-19R (356 aa).

One copy of the ANK repeat lies at 61–93; the sequence is LLNTALMKAVQENNYELIMLFTEWGANINYGLL.

This sequence belongs to the asfivirus MGF 360 family.

Plays a role in virus cell tropism, and may be required for efficient virus replication in macrophages. The chain is Protein MGF 360-19R from African swine fever virus (isolate Pig/Kenya/KEN-50/1950) (ASFV).